Consider the following 393-residue polypeptide: Phosphoglycerate kinase (393 aa).

Substrate-binding positions include 21–23 (DMN), Arg-36, 59–62 (HLGR), Arg-114, and Arg-147. Residues Lys-198, Glu-320, and 346–349 (GGDT) each bind ATP.

It belongs to the phosphoglycerate kinase family. In terms of assembly, monomer.

It is found in the cytoplasm. The enzyme catalyses (2R)-3-phosphoglycerate + ATP = (2R)-3-phospho-glyceroyl phosphate + ADP. The protein operates within carbohydrate degradation; glycolysis; pyruvate from D-glyceraldehyde 3-phosphate: step 2/5. In Thiobacillus denitrificans (strain ATCC 25259 / T1), this protein is Phosphoglycerate kinase.